We begin with the raw amino-acid sequence, 422 residues long: Receptor homology region, transmembrane domain- and RING domain-containing protein 3 (422 aa).

The N-terminal stretch at 1 to 22 (MNLVVLLILTLLLFIVSYVVDA) is a signal peptide. Residues 23-168 (GQVILVDSNI…NTEDSVWSLY (146 aa)) lie on the Lumenal side of the membrane. N-linked (GlcNAc...) asparagine glycosylation is present at N31. Cysteines 64 and 89 form a disulfide. Residues 81 to 146 (LVLIIRGGCS…RAGEMLKKYA (66 aa)) form the PA domain. The helical transmembrane segment at 169–189 (ASIALILSLAIFCVMVTCVFF) threads the bilayer. The Cytoplasmic portion of the chain corresponds to 190–422 (YRYCSTIRNS…HFASAHSLPD (233 aa)). Residues 232 to 274 (CAICLEDYIVGDKLRVLPCSHKFHVACVDSWLISWRTFCPVCK) form an RING-type; atypical zinc finger. A disordered region spans residues 344–368 (LRRQASPLQSSSQRSHLSMKSSHSL). Positions 349 to 368 (SPLQSSSQRSHLSMKSSHSL) are enriched in polar residues.

It localises to the prevacuolar compartment membrane. It is found in the protein storage vacuole membrane. Functionally, involved in the trafficking of vacuolar proteins. May function as a sorting receptor for protein trafficking to the protein storage vacuole (PSV). The polypeptide is Receptor homology region, transmembrane domain- and RING domain-containing protein 3 (RMR3) (Arabidopsis thaliana (Mouse-ear cress)).